The primary structure comprises 310 residues: 300 kDa antigen AG231 (310 aa).

The interval Val-1–Cys-23 is 4 X 6 AA tandem repeats of V-V-T-G-S-C. Residues Val-29–His-106 are 13 X 6 AA tandem repeats of V-V-[TI]-[QE]-E-[PH]. Low complexity predominate over residues Val-53–Val-101. A disordered region spans residues Val-53–Lys-310. Basic and acidic residues-rich tracts occupy residues Val-103–Glu-114 and Asn-147–Ser-160. A 45 AA repeat 1 repeat occupies Ile-107–Lys-152. Positions Thr-176–Ile-190 are enriched in polar residues. Residues Val-188–His-265 form a 13 X 6 AA approximate tandem repeats region. Positions Gln-191–Pro-235 are enriched in low complexity. Positions Ile-236 to Gln-263 are enriched in polar residues. A compositionally biased stretch (basic and acidic residues) spans Glu-264–Glu-273. Residues Ala-266–Lys-310 form a 45 AA repeat 2 repeat.

In Plasmodium falciparum (isolate FC27 / Papua New Guinea), this protein is 300 kDa antigen AG231 (FIRA).